Reading from the N-terminus, the 765-residue chain is LPS-assembly protein LptD (765 aa).

A signal peptide spans 1–18 (MQIRYLLALSLLPKLVLA).

It belongs to the LptD family. In terms of assembly, component of the lipopolysaccharide transport and assembly complex. Interacts with LptE and LptA.

It localises to the cell outer membrane. Its function is as follows. Together with LptE, is involved in the assembly of lipopolysaccharide (LPS) at the surface of the outer membrane. This is LPS-assembly protein LptD from Shewanella oneidensis (strain ATCC 700550 / JCM 31522 / CIP 106686 / LMG 19005 / NCIMB 14063 / MR-1).